The chain runs to 425 residues: Gamma-glutamyl phosphate reductase (425 aa).

It belongs to the gamma-glutamyl phosphate reductase family.

Its subcellular location is the cytoplasm. The enzyme catalyses L-glutamate 5-semialdehyde + phosphate + NADP(+) = L-glutamyl 5-phosphate + NADPH + H(+). It functions in the pathway amino-acid biosynthesis; L-proline biosynthesis; L-glutamate 5-semialdehyde from L-glutamate: step 2/2. Functionally, catalyzes the NADPH-dependent reduction of L-glutamate 5-phosphate into L-glutamate 5-semialdehyde and phosphate. The product spontaneously undergoes cyclization to form 1-pyrroline-5-carboxylate. The sequence is that of Gamma-glutamyl phosphate reductase from Novosphingobium aromaticivorans (strain ATCC 700278 / DSM 12444 / CCUG 56034 / CIP 105152 / NBRC 16084 / F199).